A 1527-amino-acid chain; its full sequence is DNA-directed RNA polymerase subunit beta'' (1527 aa).

Residues C220, C296, C303, and C306 each coordinate Zn(2+). Composition is skewed to basic and acidic residues over residues 644-661 (RTQE…RTRE) and 671-681 (PENKYRTREGE). Disordered regions lie at residues 644 to 681 (RTQE…REGE) and 712 to 793 (YRTL…KKEG). Acidic residues-rich tracts occupy residues 737-755 (GEYE…SSED) and 763-786 (TLEE…PEED).

This sequence belongs to the RNA polymerase beta' chain family. RpoC2 subfamily. In terms of assembly, in plastids the minimal PEP RNA polymerase catalytic core is composed of four subunits: alpha, beta, beta', and beta''. When a (nuclear-encoded) sigma factor is associated with the core the holoenzyme is formed, which can initiate transcription. Requires Zn(2+) as cofactor.

Its subcellular location is the plastid. It localises to the chloroplast. The enzyme catalyses RNA(n) + a ribonucleoside 5'-triphosphate = RNA(n+1) + diphosphate. Its function is as follows. DNA-dependent RNA polymerase catalyzes the transcription of DNA into RNA using the four ribonucleoside triphosphates as substrates. In Zea mays (Maize), this protein is DNA-directed RNA polymerase subunit beta''.